The chain runs to 503 residues: Ell-associated factor Eaf (503 aa).

2 stretches are compositionally biased toward polar residues: residues 143–158 and 170–189; these read PGQQ…TNVA and ENST…SRRN. Disordered regions lie at residues 143-223 and 251-503; these read PGQQ…PAWD and NGSQ…EDDD. Residue Ser199 is modified to Phosphoserine. Positions 251–264 are enriched in polar residues; that stretch reads NGSQANTSGSSTGS. The segment covering 281–296 has biased composition (basic residues); it reads GKQRQAPHHGHAKRQQ. Polar residues predominate over residues 297 to 311; that stretch reads RSSPPMVQQQPNFGR. The span at 312–326 shows a compositional bias: low complexity; that stretch reads NSYNGGNNYAQQQQH. Positions 382–397 are enriched in acidic residues; sequence DSSDSDSGSDSDDSTE. Composition is skewed to low complexity over residues 415–435 and 484–497; these read MHHQ…QQQH and NDLL…SSNS.

The protein belongs to the EAF family.

The protein resides in the nucleus. In terms of biological role, promotes transcriptional elongation by Su(Tpl)/ELL. Essential for development. The chain is Ell-associated factor Eaf from Drosophila ananassae (Fruit fly).